Consider the following 113-residue polypeptide: U11-theraphotoxin-Hhn1r (113 aa).

A signal peptide spans 1-21 (MNTVRVTFLLVFVLAVSLGQA). A propeptide spanning residues 22 to 74 (DKDENRMEMQEKTEQGKSYLDFAENLLLQKLEELEAKLLEEDSEESRNSRQKR) is cleaved from the precursor. Residues 61–83 (EEDSEESRNSRQKRCIGEGVPCD) are disordered. Cystine bridges form between Cys75-Cys90, Cys82-Cys95, and Cys89-Cys110.

It belongs to the neurotoxin 14 (magi-1) family. 01 (HNTX-16) subfamily. As to expression, expressed by the venom gland.

It is found in the secreted. In terms of biological role, probable ion channel inhibitor. In Cyriopagopus hainanus (Chinese bird spider), this protein is U11-theraphotoxin-Hhn1r.